A 63-amino-acid chain; its full sequence is Small ribosomal subunit protein eS17 (63 aa).

It belongs to the eukaryotic ribosomal protein eS17 family.

The protein is Small ribosomal subunit protein eS17 of Methanococcus maripaludis (strain DSM 14266 / JCM 13030 / NBRC 101832 / S2 / LL).